A 213-amino-acid chain; its full sequence is MAKNYYDITLALSGICQSARLVQQLAHQGHCDADALHVSLNSVIDMNPSSTLGVFGGSEANLRLGLETLLGVLNASSRQGLNAELTRYTLSLMVLERKLSSAKGALNTLGDRINGLQRQLDHFDLQSDTLMSAMAGIYVDVISPLGPRIQVTGSPAVLQSPQVQAKVRASLLAGIRAAVLWHQVGGGRLQLMFSRHRLTTQAKQILAHLTPEL.

Residues 79-122 (QGLNAELTRYTLSLMVLERKLSSAKGALNTLGDRINGLQRQLDH) are a coiled coil.

Belongs to the HflD family.

It localises to the cytoplasm. The protein localises to the cell inner membrane. In Salmonella agona (strain SL483), this protein is High frequency lysogenization protein HflD homolog.